We begin with the raw amino-acid sequence, 242 residues long: ATP synthase subunit a (242 aa).

The next 6 membrane-spanning stretches (helical) occupy residues 29–49 (SAAY…LAFS), 84–104 (FVPV…FGMI), 114–134 (IIIT…VGFV), 140–160 (FLSL…MIII), 189–209 (VIAS…IPLM), and 210–230 (VILI…FTIL).

It belongs to the ATPase A chain family. In terms of assembly, F-type ATPases have 2 components, CF(1) - the catalytic core - and CF(0) - the membrane proton channel. CF(1) has five subunits: alpha(3), beta(3), gamma(1), delta(1), epsilon(1). CF(0) has three main subunits: a(1), b(2) and c(9-12). The alpha and beta chains form an alternating ring which encloses part of the gamma chain. CF(1) is attached to CF(0) by a central stalk formed by the gamma and epsilon chains, while a peripheral stalk is formed by the delta and b chains.

It localises to the cell inner membrane. Key component of the proton channel; it plays a direct role in the translocation of protons across the membrane. In Rickettsia bellii (strain OSU 85-389), this protein is ATP synthase subunit a.